We begin with the raw amino-acid sequence, 1732 residues long: Transient receptor potential cation channel subfamily M member 3 (1732 aa).

The Cytoplasmic portion of the chain corresponds to 1–894; that stretch reads MPEPWGTVYF…RKIYEFYNAP (894 aa). Calmodulin-binding regions lie at residues 192-215, 300-323, 601-624, and 793-816; these read NFELQPKLKQVFGKGLIKAAMTTG, TGKYGAEVKLRRQLEKHISLQKIN, RKRFRTLYHNLFGPKRPKALKLLG, and RKNSGLKVILGILLPPSILSLEFK. The tract at residues 617-625 is required for the inhibitory action of G-beta/gamma-subunits of heterotrimeric G-proteins; the sequence is PKALKLLGM. S796 is a binding site for 1,2-dioctanoyl-sn-glycero-3-phospho-(1D-myo-inositol-4,5-bisphosphate). A helical transmembrane segment spans residues 895-918; the sequence is IVKFWFYTLAYIGYLMLFNYIVLV. The Extracellular portion of the chain corresponds to 919 to 925; that stretch reads KMERWPS. The helical transmembrane segment at 926 to 948 threads the bilayer; sequence TQEWIVISYIFTLGIEKMREILM. Residues 949–964 lie on the Cytoplasmic side of the membrane; sequence SEPGKLLQKVKVWLQE. Residues 965-985 form a helical membrane-spanning segment; it reads YWNVTDLIAILLFSVGMILRL. Topologically, residues 986 to 989 are extracellular; sequence QDQP. Residues 990–1013 traverse the membrane as a helical segment; the sequence is FRSDGRVIYCVNIIYWYIRLLDIF. At 1014–1028 the chain is on the cytoplasmic side; sequence GVNKYLGPYVMMIGK. 1,2-dioctanoyl-sn-glycero-3-phospho-(1D-myo-inositol-4,5-bisphosphate) contacts are provided by K1017 and Y1018. The helical transmembrane segment at 1029-1056 threads the bilayer; sequence MMIDMMYFVIIMLVVLMSFGVARQAILF. Residues 1057-1111 are Extracellular-facing; that stretch reads PNEEPSWKLAKNIFYMPYWMIYGEVFADQIDPPCGQNETREDGKIIQLPPCKTGA. Residues 1112-1137 form a helical membrane-spanning segment; it reads WIVPAIMACYLLVANILLVNLLIAVF. Residues 1138-1732 lie on the Cytoplasmic side of the membrane; the sequence is NNTFFEVKSI…AFQSFESKHN (595 aa). Positions 1241–1301 form a coiled coil; sequence ERIRVTSERV…LERLTGLERA (61 aa). The span at 1459 to 1476 shows a compositional bias: low complexity; that stretch reads PVPSTAPSSSAYATLAPT. Disordered stretches follow at residues 1459–1478 and 1611–1732; these read PVPSTAPSSSAYATLAPTDR and REAE…SKHN. 3 stretches are compositionally biased toward polar residues: residues 1635 to 1653, 1690 to 1701, and 1720 to 1732; these read AISSQEGDNSERTLSNNIT, NTASLRNPFQRS, and RTSAFQSFESKHN.

Belongs to the transient receptor (TC 1.A.4) family. LTrpC subfamily. TRPM3 sub-subfamily. As to quaternary structure, homotetramer. Interacts with TRPM1; the interaction results in the formation of a heteromultimeric cation channel complex that are functionally different from the homomeric channels. In terms of tissue distribution, expressed primarily in the kidney and, at lower levels, in brain, testis, ovary, pancreas and spinal cord. Expression in the brain and kidney was determined at protein level. In the kidney, expressed predominantly in the collecting tubular epithelium in the medulla, medullary rays, and periglomerular regions; in the brain, highest levels are found in the cerebellum, choroid plexus, the locus coeruleus, the posterior thalamus and the substantia nigra. Down-regulated in renal tumors compared to normal kidney. Expressed in the lens.

It localises to the cell membrane. The catalysed reaction is Ca(2+)(in) = Ca(2+)(out). The enzyme catalyses Mn(2+)(in) = Mn(2+)(out). It catalyses the reaction Zn(2+)(in) = Zn(2+)(out). It carries out the reaction Mg(2+)(in) = Mg(2+)(out). With respect to regulation, activated by the neurosteroid pregnelonone sulfate (PregS); PregS activates the channel by shifting its current-voltage activation curve toward more negative membrane potentials and also potentiates temperature-induced activation. Activated by sphingosine. Activated by heat. Intracellular Ca(2+) inhibits TRPM3 probably via interaction with Ca(2+)/calmodulin. Intracellular Mg(2+) inhibits TRPM3 activity. Both intracellular and extracellular protons block TRPM3 through propable binding sites in the pore region. Positively regulated by phosphoinositide phosphoinositol 4,5-biphosphate (PI(4,5)P2). Strongly inhibited by activation of G(i)-coupled receptors via direct binding with G-betagamma-subunits of heterotrimeric G-proteins. In terms of biological role, constitutively active, non-selective divalent cation-conducting channel that is permeable to Ca(2+), Mn(2+), and Mg(2+), with a high permeability for Ca(2+). However, can be enhanced by increasing temperature and by ligands, including the endogenous neurosteroid pregnenolone sulfate and sphingosine-1 and suppressed by intracellular Mg(2+). Implicated in a variety of cellular processes, including insulin/peptide secretion, vascular constriction and dilation, noxious heat sensing, inflammatory and spontaneous pain sensitivity. In neurons of the dorsal root ganglia, functions as thermosensitive channel for the detection of noxious heat and spontaneous pain. Suggested to function as an ionotropic steroid receptor in beta-cell, indeed pregnenolone sulfate leads to Ca(2+) influx and enhanced insulin secretion. Mediates Zn(2+) uptake into the lumen of pancreatic beta cell secretory granules, thereby regulating insulin secretion. Forms heteromultimeric ion channels with TRPM1 which are permeable for Ca(2+) and Zn(2+) ions. Exists as multiple splice variants which differ significantly in their biophysical properties. This chain is Transient receptor potential cation channel subfamily M member 3, found in Homo sapiens (Human).